We begin with the raw amino-acid sequence, 82 residues long: Small ribosomal subunit protein eS27 (82 aa).

Zn(2+) contacts are provided by C37, C40, C56, and C59.

This sequence belongs to the eukaryotic ribosomal protein eS27 family. Component of the small ribosomal subunit. Mature ribosomes consist of a small (40S) and a large (60S) subunit. The 40S subunit contains about 32 different proteins and 1 molecule of RNA (18S). The 60S subunit contains 45 different proteins and 3 molecules of RNA (25S, 5.8S and 5S). The cofactor is Zn(2+).

The protein resides in the cytoplasm. Its function is as follows. Component of the ribosome, a large ribonucleoprotein complex responsible for the synthesis of proteins in the cell. The small ribosomal subunit (SSU) binds messenger RNAs (mRNAs) and translates the encoded message by selecting cognate aminoacyl-transfer RNA (tRNA) molecules. The large subunit (LSU) contains the ribosomal catalytic site termed the peptidyl transferase center (PTC), which catalyzes the formation of peptide bonds, thereby polymerizing the amino acids delivered by tRNAs into a polypeptide chain. The nascent polypeptides leave the ribosome through a tunnel in the LSU and interact with protein factors that function in enzymatic processing, targeting, and the membrane insertion of nascent chains at the exit of the ribosomal tunnel. In Candida albicans (strain SC5314 / ATCC MYA-2876) (Yeast), this protein is Small ribosomal subunit protein eS27 (RPS27).